We begin with the raw amino-acid sequence, 360 residues long: Galactoside alpha-(1,2)-fucosyltransferase 1 (360 aa).

The Cytoplasmic portion of the chain corresponds to 1 to 8; the sequence is MWAPGHHH. A helical; Signal-anchor for type II membrane protein transmembrane segment spans residues 9 to 27; that stretch reads LCLIFLLTCVFACVFFLLI. At 28-360 the chain is on the lumenal side; sequence HQNLFHSGLD…GINADLSPLQ (333 aa). Residues Asn65, Asn301, and Asn327 are each glycosylated (N-linked (GlcNAc...) asparagine).

It belongs to the glycosyltransferase 11 family. As to expression, expressed in brain, intestine and kidney.

Its subcellular location is the golgi apparatus. It localises to the golgi stack membrane. The catalysed reaction is a ganglioside GM1 + GDP-beta-L-fucose = a ganglioside Fuc-GM1 + GDP + H(+). It catalyses the reaction a beta-D-galactosyl-(1-&gt;4)-N-acetyl-beta-D-glucosaminyl derivative + GDP-beta-L-fucose = an alpha-L-Fuc-(1-&gt;2)-beta-D-Gal-(1-&gt;4)-beta-D-GlcNAc derivative + GDP + H(+). It carries out the reaction a ganglioside GA1 + GDP-beta-L-fucose = a ganglioside Fuc-GA1 + GDP + H(+). The enzyme catalyses a beta-D-Gal-(1-&gt;3)-beta-D-GlcNAc-(1-&gt;3)-beta-D-Gal-(1-&gt;4)-beta-D-Glc-(1&lt;-&gt;1')-Cer(d18:1(4E)) + GDP-beta-L-fucose = alpha-L-fucosyl-(1-&gt;2)- beta-D-galactosyl-(1-&gt;3)-N-acetyl-beta-D-glucosaminyl-(1-&gt;3)-beta-D-galactosyl-(1-&gt;4)-beta-D-glucosyl-(1&lt;-&gt;1')-N-acylsphing-4-enine + GDP + H(+). The catalysed reaction is a neolactoside nLc4Cer(d18:1(4E)) + GDP-beta-L-fucose = a neolactoside IV(2)-alpha-Fuc-nLc4Cer(d18:1(4E)) + GDP + H(+). It catalyses the reaction beta-D-galactosyl-(1-&gt;3)-N-acetyl-D-galactosamine + GDP-beta-L-fucose = alpha-L-fucosyl-(1-&gt;2)-beta-D-galactosyl-(1-&gt;3)-N-acetyl-D-galactosamine + GDP + H(+). Its pathway is protein modification; protein glycosylation. Functionally, catalyzes the transfer of L-fucose, from a guanosine diphosphate-beta-L-fucose, to the terminal galactose residue of glycoconjugates through an alpha(1,2) linkage leading to H antigen synthesis that is an intermediate substrate in the synthesis of ABO blood group antigens. H antigen is essential for maturation of the glomerular layer of the main olfactory bulb, in cell migration and early cell-cell contacts during tumor associated angiogenesis. Preferentially fucosylates soluble lactose and to a lesser extent, fucosylates glycolipids gangliosides GA1 and GM1a. The sequence is that of Galactoside alpha-(1,2)-fucosyltransferase 1 from Bos taurus (Bovine).